The chain runs to 858 residues: Phosphoenolpyruvate carboxylase (858 aa).

Active-site residues include His145 and Lys531.

Belongs to the PEPCase type 1 family. The cofactor is Mg(2+).

It catalyses the reaction oxaloacetate + phosphate = phosphoenolpyruvate + hydrogencarbonate. Its function is as follows. Forms oxaloacetate, a four-carbon dicarboxylic acid source for the tricarboxylic acid cycle. This is Phosphoenolpyruvate carboxylase from Thermus thermophilus (strain ATCC BAA-163 / DSM 7039 / HB27).